The chain runs to 1028 residues: Golgin subfamily A member 2 (1028 aa).

Residues 1 to 112 (MADQNRQIKL…NRPLSSTESL (112 aa)) form a disordered region. The segment covering 40–60 (KGDQTDAPADRRSPENERVDV) has biased composition (basic and acidic residues). Positions 74-87 (NPASAINTDNSAPQ) are enriched in polar residues. Coiled-coil stretches lie at residues 162 to 200 (NTQLTSKLETLTKQSQELSDQLQKERKEFEQKFTKEQGA), 233 to 388 (ARQK…YAVQ), 414 to 690 (RDST…LLNG), 738 to 769 (LSRVEAERDEMSRRLEEERRIHQDTRQQLTAL), and 799 to 840 (HEAL…LSGE). Residues 259–280 (RTLSSVSTQQKQHERHNKELEK) are disordered. The tract at residues 756-791 (RRIHQDTRQQLTALSHDHHHHHHHEPHSTCAETDGS) is disordered. The interval 944 to 981 (AMDVSSSPQSSTAEIQSQSSERPAADPISSPSLRPQED) is disordered. The segment covering 945–964 (MDVSSSPQSSTAEIQSQSSE) has biased composition (polar residues).

The protein belongs to the GOLGA2 family.

The protein resides in the golgi apparatus. Its subcellular location is the cis-Golgi network membrane. It is found in the endoplasmic reticulum-Golgi intermediate compartment membrane. The protein localises to the cytoplasm. It localises to the cytoskeleton. The protein resides in the spindle pole. Its function is as follows. Peripheral membrane component of the cis-Golgi stack that acts as a membrane skeleton that maintains the structure of the Golgi apparatus, and as a vesicle thether that facilitates vesicle fusion to the Golgi membrane. Required for normal protein transport from the endoplasmic reticulum to the Golgi apparatus and the cell membrane. Plays a central role in mitotic Golgi disassembly. Also plays a key role in spindle pole assembly and centrosome organization. It probably promotes mitotic spindle pole assembly by activating assembly factors to nucleate microtubules around the Golgi and capture them to couple mitotic membranes to the spindle. Also required for the Golgi ribbon formation and glycosylation of membrane and secretory proteins. This Danio rerio (Zebrafish) protein is Golgin subfamily A member 2.